Here is a 464-residue protein sequence, read N- to C-terminus: Probable 3-ketoacyl-CoA synthase 21 (464 aa).

A helical membrane pass occupies residues 21-41 (LLSSGVSVFEIFAGLLVVHLI). The 292-residue stretch at 42–333 (YQRIRTRVKV…VIQHILCKKL (292 aa)) folds into the FAE domain. Residues cysteine 187, histidine 352, histidine 356, histidine 385, and asparagine 389 contribute to the active site.

Belongs to the thiolase-like superfamily. Chalcone/stilbene synthases family. As to expression, expressed in flowers.

It is found in the membrane. The enzyme catalyses a very-long-chain acyl-CoA + malonyl-CoA + H(+) = a very-long-chain 3-oxoacyl-CoA + CO2 + CoA. Its pathway is lipid metabolism; fatty acid biosynthesis. This chain is Probable 3-ketoacyl-CoA synthase 21, found in Arabidopsis thaliana (Mouse-ear cress).